The chain runs to 233 residues: MKFIILTLFPESFDYLKSYGVIGKAIQNNLIELEVVNIRDYTKNKHKKVDDEIYGGGAGMLMTCQPIYDCLEDVNKNQSKVVFMSPQGKVLNQQKCIELSKEKEIVILCGHYEGVDSRIINHYCDEEISIGDYVMTGGELGAMVLIDCVSRMINDVLGNDESYKTDSHYNLLLQEDSYTRPRVFNGYEVPEVLLSGNHEKIEQWREKSRLNNTKLKREDIYQKYLKEKNQGGS.

Residues glycine 110 and 130-135 contribute to the S-adenosyl-L-methionine site; that span reads IGDYVM.

It belongs to the RNA methyltransferase TrmD family. As to quaternary structure, homodimer.

The protein resides in the cytoplasm. The catalysed reaction is guanosine(37) in tRNA + S-adenosyl-L-methionine = N(1)-methylguanosine(37) in tRNA + S-adenosyl-L-homocysteine + H(+). Functionally, specifically methylates guanosine-37 in various tRNAs. The chain is tRNA (guanine-N(1)-)-methyltransferase from Finegoldia magna (strain ATCC 29328 / DSM 20472 / WAL 2508) (Peptostreptococcus magnus).